A 433-amino-acid chain; its full sequence is Phosphoribosylamine--glycine ligase (433 aa).

Residues 111-317 form the ATP-grasp domain; the sequence is EFMARNNIKG…FVDICEAIVD (207 aa). 138–194 provides a ligand contact to ATP; it reads EDNPDVVVKPAGLTGGKGVKVMGEHMHTLEEAREYVKSVLEHDRVVIEERLKGEEVT. The Mg(2+) site is built by Q275, E287, and N289. Mn(2+) is bound by residues Q275, E287, and N289.

The protein belongs to the GARS family. It depends on Mg(2+) as a cofactor. Requires Mn(2+) as cofactor.

It catalyses the reaction 5-phospho-beta-D-ribosylamine + glycine + ATP = N(1)-(5-phospho-beta-D-ribosyl)glycinamide + ADP + phosphate + H(+). Its pathway is purine metabolism; IMP biosynthesis via de novo pathway; N(1)-(5-phospho-D-ribosyl)glycinamide from 5-phospho-alpha-D-ribose 1-diphosphate: step 2/2. This is Phosphoribosylamine--glycine ligase from Methanocella arvoryzae (strain DSM 22066 / NBRC 105507 / MRE50).